Here is a 404-residue protein sequence, read N- to C-terminus: Probable tRNA sulfurtransferase (404 aa).

The THUMP domain maps to 60–165 (QPVVEALKLV…DEAAYISYEE (106 aa)). Residues 183–184 (ML), 208–209 (HF), R265, G287, and Q296 contribute to the ATP site.

Belongs to the ThiI family.

Its subcellular location is the cytoplasm. The enzyme catalyses [ThiI sulfur-carrier protein]-S-sulfanyl-L-cysteine + a uridine in tRNA + 2 reduced [2Fe-2S]-[ferredoxin] + ATP + H(+) = [ThiI sulfur-carrier protein]-L-cysteine + a 4-thiouridine in tRNA + 2 oxidized [2Fe-2S]-[ferredoxin] + AMP + diphosphate. It carries out the reaction [ThiS sulfur-carrier protein]-C-terminal Gly-Gly-AMP + S-sulfanyl-L-cysteinyl-[cysteine desulfurase] + AH2 = [ThiS sulfur-carrier protein]-C-terminal-Gly-aminoethanethioate + L-cysteinyl-[cysteine desulfurase] + A + AMP + 2 H(+). It participates in cofactor biosynthesis; thiamine diphosphate biosynthesis. In terms of biological role, catalyzes the ATP-dependent transfer of a sulfur to tRNA to produce 4-thiouridine in position 8 of tRNAs, which functions as a near-UV photosensor. Also catalyzes the transfer of sulfur to the sulfur carrier protein ThiS, forming ThiS-thiocarboxylate. This is a step in the synthesis of thiazole, in the thiamine biosynthesis pathway. The sulfur is donated as persulfide by IscS. In Streptococcus pyogenes serotype M6 (strain ATCC BAA-946 / MGAS10394), this protein is Probable tRNA sulfurtransferase.